Consider the following 93-residue polypeptide: Large ribosomal subunit protein uL23 (93 aa).

The protein belongs to the universal ribosomal protein uL23 family. As to quaternary structure, part of the 50S ribosomal subunit. Contacts protein L29, and trigger factor when it is bound to the ribosome.

Its function is as follows. One of the early assembly proteins it binds 23S rRNA. One of the proteins that surrounds the polypeptide exit tunnel on the outside of the ribosome. Forms the main docking site for trigger factor binding to the ribosome. This chain is Large ribosomal subunit protein uL23, found in Nautilia profundicola (strain ATCC BAA-1463 / DSM 18972 / AmH).